A 374-amino-acid chain; its full sequence is Double homeobox protein 4C (374 aa).

A compositionally biased stretch (polar residues) spans 1 to 10 (MALPTPSDST). 3 disordered regions span residues 1–24 (MALP…RRRL), 72–102 (SRQL…TAVT), and 218–374 (LQPS…YELL). DNA-binding regions (homeobox) lie at residues 19–78 (GRRR…LRQH) and 94–153 (GRRK…PGQG). Over residues 265 to 274 (KSREDRDPQR) the composition is skewed to basic and acidic residues. Low complexity-rich tracts occupy residues 278–302 (PGPC…LAPP) and 319–329 (AGAAWEPQAGA). Positions 354–374 (QPLQEPGRSSTVTSSLLYELL) are enriched in polar residues.

In terms of assembly, may interact with MYF5; regulates MYF5 expression. In terms of tissue distribution, expressed in muscles, as well as in primary myoblasts and myotubes (at protein level).

It localises to the nucleus. The protein resides in the cytoplasm. Its function is as follows. Down-regulates MYOD1 expression and may up-regulate MYF5 expression. May regulate microRNA (miRNA) transcription, up-regulating the expression of some myogenic miRNAs, including MIR1-1, MIR133A2, MIR133B and MIR206. Impairs the differentiation of myoblasts and may be involved in muscle regeneration. Reduces DUX4-induced nuclear localization of CTNNB1/beta-catenin and its subsequent activation of target genes. The chain is Double homeobox protein 4C (DUX4L9) from Homo sapiens (Human).